Here is a 235-residue protein sequence, read N- to C-terminus: Acyl-protein thioesterase 1 (235 aa).

Catalysis depends on charge relay system residues S119, D172, and H206.

Belongs to the AB hydrolase superfamily. AB hydrolase 2 family.

Its subcellular location is the cytoplasm. It is found in the nucleus. The catalysed reaction is S-hexadecanoyl-L-cysteinyl-[protein] + H2O = L-cysteinyl-[protein] + hexadecanoate + H(+). Hydrolyzes fatty acids from S-acylated cysteine residues in proteins with a strong preference for palmitoylated G-alpha proteins over other acyl substrates. Mediates the deacylation of G-alpha proteins such as GPA1 in vivo, but has weak or no activity toward palmitoylated Ras proteins. Has weak lysophospholipase activity in vitro; however such activity may not exist in vivo. This Eremothecium gossypii (strain ATCC 10895 / CBS 109.51 / FGSC 9923 / NRRL Y-1056) (Yeast) protein is Acyl-protein thioesterase 1.